Reading from the N-terminus, the 118-residue chain is Cell division protein FtsB (118 aa).

Topologically, residues 1-3 (MRL) are cytoplasmic. Residues 4–21 (LFLVLLVLLGLIQYPLWL) form a helical membrane-spanning segment. The Periplasmic segment spans residues 22–118 (GKGGWFKVWD…PRPPATPPRR (97 aa)). Residues 28–62 (KVWDLQRQVAEQRETNDGLRARNTALEAEVRDLAT) are a coiled coil. Positions 88–118 (LPPGTPLPSDNSTPQASALSKPRPPATPPRR) are disordered. Polar residues predominate over residues 95 to 105 (PSDNSTPQASA). Residues 109–118 (PRPPATPPRR) are compositionally biased toward pro residues.

It belongs to the FtsB family. In terms of assembly, part of a complex composed of FtsB, FtsL and FtsQ.

It is found in the cell inner membrane. Essential cell division protein. May link together the upstream cell division proteins, which are predominantly cytoplasmic, with the downstream cell division proteins, which are predominantly periplasmic. This Bordetella bronchiseptica (strain ATCC BAA-588 / NCTC 13252 / RB50) (Alcaligenes bronchisepticus) protein is Cell division protein FtsB.